The following is a 400-amino-acid chain: Vitamin K-dependent protein Z (400 aa).

Positions 1–23 (MAGCVPLLQGLVLVLALHRVEPS) are cleaved as a signal peptide. Positions 24–40 (VFLPASKANDVLVRWKR) are excised as a propeptide. Residues 41–86 (AGSYLLEELFEGNLEKECYEEICVYEEAREVFENEVVTDEFWRRYK) enclose the Gla domain. 4-carboxyglutamate is present on residues E47, E48, E51, E55, E57, E60, E61, E66, E67, E70, E73, E75, and E80. C58 and C63 are oxidised to a cystine. EGF-like domains lie at 87-123 (GGSP…SNCE) and 125-166 (AKNE…KQCV). Intrachain disulfides connect C91/C102, C96/C111, C113/C122, C129/C141, C137/C150, C152/C165, and C203/C219. S93 carries O-linked (Glc...) serine glycosylation. N99 is a glycosylation site (N-linked (GlcNAc...) asparagine). (3R)-3-hydroxyaspartate is present on D104. Residues 175 to 400 (VLTSEKRAPD…YSLWFKQIMN (226 aa)) enclose the Peptidase S1 domain. Residues N225, N233, N306, and N332 are each glycosylated (N-linked (GlcNAc...) asparagine). A disulfide bond links C327 and C341.

Belongs to the peptidase S1 family. In terms of assembly, interacts with SERPINA10. The iron and 2-oxoglutarate dependent 3-hydroxylation of aspartate and asparagine is (R) stereospecific within EGF domains. As to expression, plasma.

Its subcellular location is the secreted. Its function is as follows. Appears to assist hemostasis by binding thrombin and promoting its association with phospholipid vesicles. Inhibits activity of the coagulation protease factor Xa in the presence of SERPINA10, calcium and phospholipids. This is Vitamin K-dependent protein Z (PROZ) from Homo sapiens (Human).